The chain runs to 480 residues: Oxysterol-binding protein-related protein 2 (480 aa).

Residues 1–60 (MNGEEEFFDAVTGFDSDNSSGEFSEANQKVTGMIDLDTSKNNRIGKTGERPSQENGIQKH) are disordered. Over residues 15–30 (DSDNSSGEFSEANQKV) the composition is skewed to polar residues. S19 and S20 each carry phosphoserine. Residues K90, 178–179 (HH), and 427–431 (EEKQR) each bind a 1,2-diacyl-sn-glycero-3-phospho-(1D-myo-inositol-4,5-bisphosphate).

The protein belongs to the OSBP family. As to quaternary structure, monomer. Homotetramer; phosphatidylinositol-4,5-bisphosphate binding promotes formation of stable tetramers. Interacts with DIAPH1. Widely expressed.

Its subcellular location is the cytoplasm. The protein resides in the cytosol. It localises to the lipid droplet. It is found in the cell membrane. Functionally, intracellular transport protein that binds sterols and phospholipids and mediates lipid transport between intracellular compartments. Increases plasma membrane cholesterol levels and decreases phosphatidylinositol-4,5-bisphosphate levels in the cell membrane. Binds phosphoinositides, such as phosphatidylinositol-4,5-bisphosphate. Exhibits strong binding to phosphatidic acid and weak binding to phosphatidylinositol 3-phosphate. Binds cholesterol, dehydroergosterol, 22(R)-hydroxycholesterol and 25-hydroxycholesterol (in vitro). In Homo sapiens (Human), this protein is Oxysterol-binding protein-related protein 2 (OSBPL2).